The sequence spans 496 residues: Glutamate--tRNA ligase (496 aa).

Residues 12–22 (PSPTGHLHIGN) carry the 'HIGH' region motif. The 'KMSKS' region motif lies at 259–263 (KLSKR). Lysine 262 serves as a coordination point for ATP.

Belongs to the class-I aminoacyl-tRNA synthetase family. Glutamate--tRNA ligase type 1 subfamily. As to quaternary structure, monomer.

It localises to the cytoplasm. It catalyses the reaction tRNA(Glu) + L-glutamate + ATP = L-glutamyl-tRNA(Glu) + AMP + diphosphate. Catalyzes the attachment of glutamate to tRNA(Glu) in a two-step reaction: glutamate is first activated by ATP to form Glu-AMP and then transferred to the acceptor end of tRNA(Glu). The polypeptide is Glutamate--tRNA ligase (Lactiplantibacillus plantarum (strain ATCC BAA-793 / NCIMB 8826 / WCFS1) (Lactobacillus plantarum)).